The following is a 1705-amino-acid chain: Rho guanine nucleotide exchange factor 28 (1705 aa).

Disordered stretches follow at residues Arg-287 to Glu-316 and Lys-473 to Thr-524. 2 positions are modified to phosphoserine: Ser-313 and Ser-478. The segment covering Pro-501–Gly-510 has biased composition (polar residues). Ser-624 carries the post-translational modification Phosphoserine. The tract at residues Met-630–Lys-649 is disordered. The span at Lys-640 to Lys-649 shows a compositional bias: basic and acidic residues. Residues Arg-652–Cys-699 form a Phorbol-ester/DAG-type zinc finger. Composition is skewed to polar residues over residues Asn-710–Phe-721 and Val-759–Glu-775. The tract at residues Asn-710–Pro-800 is disordered. Basic and acidic residues predominate over residues Glu-777–Glu-791. Residues Lys-849–Lys-1044 form the DH domain. One can recognise a PH domain in the interval Thr-1086–Glu-1188. A disordered region spans residues Val-1187–Lys-1207. The segment covering Pro-1191–Lys-1207 has biased composition (basic and acidic residues). The tract at residues Ala-1295–Cys-1304 is interaction with PTK2/FAK1; required for regulation of axonal branching and synapse formation. Residues Thr-1312 to Val-1339 form a disordered region. Residues Ile-1372–Leu-1383 are mediates cytoplasmic retention and interaction with YWHAH. The segment at Gln-1425–Leu-1705 is interaction with microtubules. A coiled-coil region spans residues Arg-1488–Gln-1525. The RNA-binding stretch occupies residues Gln-1496 to Leu-1527. Phosphoserine is present on Ser-1538. Residues Phe-1566–Phe-1579 are mediates cytoplasmic retention and interaction with MAPK8IP1. The tract at residues Pro-1638–Leu-1705 is disordered. Residues Glu-1641–His-1655 are compositionally biased toward basic and acidic residues. Residues Thr-1656 to Pro-1669 are compositionally biased toward polar residues. Residues Thr-1688 to Lys-1699 show a composition bias toward basic and acidic residues.

Homooligomer; forms cytoplasmic aggregates. Forms a complex with MAPK8 and MAPK8IP1. Interacts with RHOA. Interacts with microtubules. Interacts with YWHAE and YWHAH. Interacts with PTK2/FAK1. Interacts with NEFL. Interacts with CTNND2; prevents interaction with RHOA. Post-translationally, phosphorylated on tyrosine upon stimulation of cells by laminin.

The protein resides in the cytoplasm. It localises to the cell membrane. Its function is as follows. Functions as a RHOA-specific guanine nucleotide exchange factor regulating signaling pathways downstream of integrins and growth factor receptors. Functions in axonal branching, synapse formation and dendritic morphogenesis. Also functions in focal adhesion formation, cell motility and B-lymphocytes activation. May regulate NEFL expression and aggregation and play a role in apoptosis. This is Rho guanine nucleotide exchange factor 28 (ARHGEF28) from Homo sapiens (Human).